Reading from the N-terminus, the 321-residue chain is Phospho-N-acetylmuramoyl-pentapeptide-transferase (321 aa).

Helical transmembrane passes span 4–24 (MVWA…WLIP), 51–71 (TMGG…TVGF), 75–95 (SGVL…DDYI), 109–129 (QKFT…VYGI), 139–159 (GFEV…LLIV), 173–193 (GLAA…ASAG), 195–215 (SDVT…FLFF), 222–242 (MFMG…LALL), 247–267 (LILP…ILQV), and 297–317 (VVYT…LLAM).

It belongs to the glycosyltransferase 4 family. MraY subfamily. It depends on Mg(2+) as a cofactor.

Its subcellular location is the cell membrane. It carries out the reaction UDP-N-acetyl-alpha-D-muramoyl-L-alanyl-gamma-D-glutamyl-meso-2,6-diaminopimeloyl-D-alanyl-D-alanine + di-trans,octa-cis-undecaprenyl phosphate = di-trans,octa-cis-undecaprenyl diphospho-N-acetyl-alpha-D-muramoyl-L-alanyl-D-glutamyl-meso-2,6-diaminopimeloyl-D-alanyl-D-alanine + UMP. Its pathway is cell wall biogenesis; peptidoglycan biosynthesis. Its function is as follows. Catalyzes the initial step of the lipid cycle reactions in the biosynthesis of the cell wall peptidoglycan: transfers peptidoglycan precursor phospho-MurNAc-pentapeptide from UDP-MurNAc-pentapeptide onto the lipid carrier undecaprenyl phosphate, yielding undecaprenyl-pyrophosphoryl-MurNAc-pentapeptide, known as lipid I. This Heliobacterium modesticaldum (strain ATCC 51547 / Ice1) protein is Phospho-N-acetylmuramoyl-pentapeptide-transferase.